The following is a 430-amino-acid chain: Stress protein DDR48 (430 aa).

The tract at residues 1 to 430 (MGLFDKVKQF…RNQYGGDDDY (430 aa)) is disordered. Residues 12-27 (NSNNNNNDSGNNNQGD) are compositionally biased toward low complexity. Positions 37-60 (GEDRVNQFKSKIGEDRFDKMESKV) are enriched in basic and acidic residues. Low complexity predominate over residues 70–421 (NDNDSNNNDS…SYGSSNRGGR (352 aa)). Tandem repeats lie at residues 74–81 (SNNNDSYG), 82–89 (SNNNDSYG), 90–97 (SNNNDSYG), 98–105 (SNNNDSYG), 106–113 (SNNNDSYG), and 114–121 (SNNDDSYG). The segment at 74–414 (SNNNDSYGSN…GSSNNDDSYG (341 aa)) is 38 X 8 AA approximate tandem repeats of S-[NS]-N-[ND]-D-S-Y-G. One copy of the 7; approximate repeat lies at 124–131 (NKKKSSYG). Tandem repeats lie at residues 132 to 139 (SNNDDSYG), 141 to 148 (SNNNDSYG), 149 to 156 (SNNNDSYG), 157 to 164 (SNNNDSYG), and 165 to 172 (SNNDDSYG). One copy of the 13; approximate repeat lies at 175 to 182 (NKNKSSYG). 2 positions are modified to phosphoserine: Ser183 and Ser191. A run of 2 repeats spans residues 183-190 (SNNDDSYG) and 191-198 (SNNDDSYG). The 16; approximate repeat unit spans residues 201 to 208 (NKKKSSYG). Tandem repeats lie at residues 209-216 (SSNNDSYG), 217-224 (SNNDDSYG), 225-232 (SNNNDSYG), and 233-240 (SNNDDSYG). Residues 243-250 (NKKKSSYG) form a 21; approximate repeat. Repeat copies occupy residues 251–258 (SNNDDSYG), 260–267 (SNNNDSYG), and 268–275 (SNNDDSYG). The 25; approximate repeat unit spans residues 278–285 (NKNKSSYG). 2 repeat units span residues 287-294 (SSNDDSYG) and 296-303 (SNNDDSYG). The 28; approximate repeat unit spans residues 306 to 313 (NKKKSSYG). A phosphoserine mark is found at Ser314 and Ser322. A run of 2 repeats spans residues 314-321 (SNNDDSYG) and 322-329 (SNNDDSYG). The stretch at 332 to 339 (NKKKSSYG) is one 31; approximate repeat. 2 tandem repeats follow at residues 340–347 (SSNNDSYG) and 348–355 (SNNDDSYG). The stretch at 358–365 (NKKKSSYG) is one 34; approximate repeat. Repeat copies occupy residues 366 to 373 (SNNDDSYG) and 375 to 382 (SNNNDSYG). The stretch at 393–400 (NRNKNSYG) is one 37; approximate repeat. Copy 38 of the repeat occupies 407–414 (SNNDDSYG).

This sequence belongs to the DDR48 family. Post-translationally, probably highly glycosylated.

Its function is as follows. DNA damage-responsive protein that may be required for maintaining the rate of spontaneous mutagenesis. Shows low ATP and GTP hydrolysis activity. Dispensable for acquisition of thermotolerance and does not play a significant role in recovery or protection of cells from acute heat shock. The chain is Stress protein DDR48 (DDR48) from Saccharomyces cerevisiae (strain ATCC 204508 / S288c) (Baker's yeast).